Reading from the N-terminus, the 388-residue chain is Chorismate synthase (388 aa).

2 residues coordinate NADP(+): R39 and R45. Residues 130–132 (RSS), 251–252 (NA), G296, 311–315 (KPIPT), and R337 each bind FMN.

The protein belongs to the chorismate synthase family. Homotetramer. FMNH2 serves as cofactor.

The enzyme catalyses 5-O-(1-carboxyvinyl)-3-phosphoshikimate = chorismate + phosphate. Its pathway is metabolic intermediate biosynthesis; chorismate biosynthesis; chorismate from D-erythrose 4-phosphate and phosphoenolpyruvate: step 7/7. Functionally, catalyzes the anti-1,4-elimination of the C-3 phosphate and the C-6 proR hydrogen from 5-enolpyruvylshikimate-3-phosphate (EPSP) to yield chorismate, which is the branch point compound that serves as the starting substrate for the three terminal pathways of aromatic amino acid biosynthesis. This reaction introduces a second double bond into the aromatic ring system. The polypeptide is Chorismate synthase (Streptococcus pneumoniae (strain 70585)).